A 265-amino-acid chain; its full sequence is MASVKKLAGKVAIVTGGASGIGEVTARLFAERGARAVVIADMQPEKGGTVAESIGGRRCSYVHCDITDEQQVRSVVDWTAATYGGVDVMFCNAGTASATAQTVLDLDLAQFDRVMRVNARGTAACVKQAARKMVELGRGGAIICTASATVHHAGPNLTDYIMSKCGVLGLVRSASLQLGVHGIRVNSVSPTALATPLTATIGLRTAADVESFYGQVTSLKGVAITAEHVAEAVAFLASDEAAFVTGHDLAVDGGLQCLPFVAVAK.

A mitochondrion-targeting transit peptide spans 1–30 (MASVKKLAGKVAIVTGGASGIGEVTARLFA). Residue 13 to 38 (IVTGGASGIGEVTARLFAERGARAVV) participates in NAD(+) binding. Position 147 (Ser147) interacts with substrate. Tyr160 (proton acceptor) is an active-site residue.

This sequence belongs to the short-chain dehydrogenases/reductases (SDR) family. In terms of assembly, homodimer and homotetramer. In terms of tissue distribution, peltate glandular trichomes.

Its subcellular location is the mitochondrion. It catalyses the reaction (1S,6R)-isopiperitenol + NAD(+) = (6R)-isopiperitenone + NADH + H(+). The catalysed reaction is (1S,5R)-carveol + NADP(+) = (R)-carvone + NADPH + H(+). In terms of biological role, involved in the biosynthesis of menthol and related monoterpenes in leaves. Can use (-)-trans-carveol and, with a lower relative velocity, (-)-trans-isopiperitenol, (+)-neomenthol, (+)-neoisomenthol and (-)-cis-isopiperitenol as substrates, but not (-)-cis-carvenol, (-)-menthol, (+)-isomenthol, 7-hydroxy-limonene, (-)-isopiperitenone or (-)-carvone. The sequence is that of (-)-isopiperitenol/(-)-carveol dehydrogenase, mitochondrial from Mentha piperita (Peppermint).